The following is a 304-amino-acid chain: Glutaminase (304 aa).

Substrate-binding residues include serine 63, asparagine 114, glutamate 158, asparagine 165, tyrosine 189, tyrosine 240, and valine 258.

The protein belongs to the glutaminase family. As to quaternary structure, homotetramer.

The catalysed reaction is L-glutamine + H2O = L-glutamate + NH4(+). This is Glutaminase from Shewanella baltica (strain OS155 / ATCC BAA-1091).